A 260-amino-acid chain; its full sequence is Apolipoprotein A-I (260 aa).

An N-terminal signal peptide occupies residues 1–18 (MKFAALALALLLAVGSHA). Residues 32 to 63 (ARAVLDVYLTQVKDMSLRAVNQLDDPQYAEFK) form a 3 X approximate tandem repeats region. 2 repeat units span residues 64–85 (TNLAQRIEEMYTQIKTLQGSVS) and 87–107 (MTDSFYNTVMEVTKDTRESLN). The 10 X approximate tandem repeats stretch occupies residues 64 to 260 (TNLAQRIEEM…EIIAASVTKS (197 aa)). The stretch at 108 to 118 (VDLEALKSSLA) is one 3; half-length repeat. 5 tandem repeats follow at residues 119–140 (PQNEQLKQVIEKHLNDYRTLLT), 141–162 (PIYNDYKTKHDEEMAALKTRLE), 163–184 (PVMEELRTKIQANVEETKAVLM), 185–206 (PMVETVRTKVTERLESLREVVQ), and 207–225 (PYVQEYKEQMKQMYDQAQT). A 9; half-length repeat occupies 226 to 236 (VDTDALRTKIT). Repeat 10 spans residues 237 to 260 (PLVEEIKVKMNAIFEIIAASVTKS).

The protein belongs to the apolipoprotein A1/A4/E family. Strong expression in liver with lower expression in intestine.

It localises to the secreted. Participates in the reverse transport of cholesterol from tissues to the liver for excretion by promoting cholesterol efflux from tissues and by acting as a cofactor for the lecithin cholesterol acyltransferase (LCAT). The polypeptide is Apolipoprotein A-I (apoa1) (Sparus aurata (Gilthead sea bream)).